The following is a 263-amino-acid chain: 3-methyl-2-oxobutanoate hydroxymethyltransferase (263 aa).

Mg(2+)-binding residues include aspartate 45 and aspartate 84. Residues 45-46 (DS), aspartate 84, and lysine 112 contribute to the 3-methyl-2-oxobutanoate site. Glutamate 114 is a binding site for Mg(2+). Glutamate 180 acts as the Proton acceptor in catalysis.

This sequence belongs to the PanB family. As to quaternary structure, homodecamer; pentamer of dimers. It depends on Mg(2+) as a cofactor.

The protein localises to the cytoplasm. The enzyme catalyses 3-methyl-2-oxobutanoate + (6R)-5,10-methylene-5,6,7,8-tetrahydrofolate + H2O = 2-dehydropantoate + (6S)-5,6,7,8-tetrahydrofolate. It participates in cofactor biosynthesis; (R)-pantothenate biosynthesis; (R)-pantoate from 3-methyl-2-oxobutanoate: step 1/2. In terms of biological role, catalyzes the reversible reaction in which hydroxymethyl group from 5,10-methylenetetrahydrofolate is transferred onto alpha-ketoisovalerate to form ketopantoate. This chain is 3-methyl-2-oxobutanoate hydroxymethyltransferase, found in Klebsiella pneumoniae (strain 342).